The primary structure comprises 167 residues: NAD(P)H-quinone oxidoreductase subunit I, chloroplastic (167 aa).

4Fe-4S ferredoxin-type domains are found at residues Gly55–Lys84 and Leu95–Glu124. The [4Fe-4S] cluster site is built by Cys64, Cys67, Cys70, Cys74, Cys104, Cys107, Cys110, and Cys114.

Belongs to the complex I 23 kDa subunit family. NDH is composed of at least 16 different subunits, 5 of which are encoded in the nucleus. Requires [4Fe-4S] cluster as cofactor.

Its subcellular location is the plastid. It localises to the chloroplast thylakoid membrane. The enzyme catalyses a plastoquinone + NADH + (n+1) H(+)(in) = a plastoquinol + NAD(+) + n H(+)(out). It carries out the reaction a plastoquinone + NADPH + (n+1) H(+)(in) = a plastoquinol + NADP(+) + n H(+)(out). Functionally, NDH shuttles electrons from NAD(P)H:plastoquinone, via FMN and iron-sulfur (Fe-S) centers, to quinones in the photosynthetic chain and possibly in a chloroplast respiratory chain. The immediate electron acceptor for the enzyme in this species is believed to be plastoquinone. Couples the redox reaction to proton translocation, and thus conserves the redox energy in a proton gradient. The sequence is that of NAD(P)H-quinone oxidoreductase subunit I, chloroplastic from Barbarea verna (Land cress).